The chain runs to 906 residues: MASFHLDHLKNYHRRYCRSSRAPNIHTKKGQNMLEILQDCFEDQSKASFLDDFTESLTSSTQKKKANYSQSSSKKCPESHSKPVPVSSRTGEASLQASAEPSEAAGGSVQANEVHHGASDELDLCVGSPVVLLDANVNTLQKAASPAGQKRVASVSRSPVDRQASNKNISFKTRKRLNFEDKVTLSTAETENSVLQVEDNLSKGQEGTSSEITQKRDDLSSDVQSRSKKNFSELFLETVKRKSKSSSVVRHTAAVPFSPPPPSDMKLLEDEFIIDRSDRSFSSRLWVMIPSKDRHLSAHKPSPENTALLQGKKSREKSHSLSAMTFARNTQSDKAHPIEEAQLSVEENPATTCTDELENDCRSPENKMQSETAKTPPAWERTTKQSQRRVSKPKAAEELRKGQSSWENSNVSNTGQDKLQINSKRNMKDCEEVRNEPNPKKQKPALENKKKTNSTQTNKEKSGKKFFSGGSKNKFVPKKVTLTSRRSCRISQRPSEWWRVKSDESSVDRNPSKENNSPVVYPNKKKQTKRNHVSKRAGKKPGSSKRQKTEMSPRVQKSLNVKDSGGTVSGHDDTSRSQRKPLKIIEADPTQKSLAISRPKRGCKYRNNVMTSPNVHLKSHTEEYTSKTQMESASNSEMSKRSVWEESGPSRFKNYEMPGSSNSEMGDEQDQKSLHFTTRSFNMVPDKKLHHKLVLPSNSPNVRRSNRIRLKPLEYWRGERVDYQESSSGQLVLEIISPSSVPTKIKAQRNLGKVNKKVTKKPTHLNSHEKAKMELPLDMRLGDPFQATLAKDPETAELVPMDLIRPRDTYRFFVEQHGLKVFKTLDTIYFSTGKLVLGPYEEKGKQHVGQDILVFYVNFGDLLCTLHETPYKLTTGDSFYVPSGNHYNIKNLLNVESSLLFTQIKR.

2 stretches are compositionally biased toward polar residues: residues serine 56 to lysine 74 and serine 87 to glutamine 96. Disordered regions lie at residues serine 56–histidine 115 and glutamine 141–isoleucine 169. 2 positions are modified to phosphoserine: serine 71 and serine 94. Residues alanine 97–serine 108 are compositionally biased toward low complexity. Glycyl lysine isopeptide (Lys-Gly) (interchain with G-Cter in SUMO2) cross-links involve residues lysine 150 and lysine 182. The interval valine 197–glutamine 224 is disordered. A compositionally biased stretch (polar residues) spans serine 202–isoleucine 212. The short motif at lysine 228–lysine 242 is the Nuclear localization signal element. Residues lysine 229, lysine 240, lysine 242, and lysine 266 each participate in a glycyl lysine isopeptide (Lys-Gly) (interchain with G-Cter in SUMO2) cross-link. Disordered regions lie at residues arginine 294–serine 320, alanine 341–isoleucine 596, and glutamate 623–glutamine 671. 4 positions are modified to phosphoserine: serine 302, serine 344, serine 363, and serine 404. The segment covering glycine 402–lysine 424 has biased composition (polar residues). Residues asparagine 426–lysine 450 show a composition bias toward basic and acidic residues. The Nuclear localization signal motif lies at lysine 449–phenylalanine 466. Residues lysine 465–lysine 474 show a composition bias toward low complexity. The span at threonine 481–proline 494 shows a compositional bias: polar residues. Phosphoserine is present on serine 495. The segment covering glutamate 496–serine 512 has biased composition (basic and acidic residues). A Glycyl lysine isopeptide (Lys-Gly) (interchain with G-Cter in SUMO2) cross-link involves residue lysine 501. Serine 505 is modified (phosphoserine). A compositionally biased stretch (basic residues) spans asparagine 523–arginine 546. A Nuclear localization signal motif is present at residues lysine 525–lysine 540. Residues serine 626–glutamate 637 show a composition bias toward polar residues. Residue lysine 640 forms a Glycyl lysine isopeptide (Lys-Gly) (interchain with G-Cter in SUMO2) linkage. Residues serine 647 and serine 673 each carry the phosphoserine modification. Residue lysine 692 forms a Glycyl lysine isopeptide (Lys-Gly) (interchain with G-Cter in SUMO2) linkage. Positions valine 702–glutamine 724 are MIF2 homology domain II. Serine 728 and serine 737 each carry phosphoserine. The short motif at lysine 744–proline 762 is the Nuclear localization signal element. Residue lysine 770 forms a Glycyl lysine isopeptide (Lys-Gly) (interchain with G-Cter in SUMO2) linkage. The tract at residues leucine 853–arginine 906 is MIF2 homology domain III.

It belongs to the CENP-C/MIF2 family. Oligomer. Component of the CENPA-NAC complex, at least composed of CENPA, CENPC, CENPH, CENPM, CENPN, CENPT and CENPU. The CENPA-NAC complex interacts with the CENPA-CAD complex, composed of CENPI, CENPK, CENPL, CENPO, CENPP, CENPQ, CENPR and CENPS. Binds to DAXX. Interacts with DNMT3B. Interacts directly with CENPA. Identified in a centromere complex containing histones H2A, H2B and H4, and at least CENPA, CENPB, CENPC, CENPT, CENPN, HJURP, SUPT16H, SSRP1 and RSF1. Interacts with MEIKIN.

It is found in the nucleus. Its subcellular location is the chromosome. It localises to the centromere. The protein resides in the kinetochore. Functionally, component of the CENPA-NAC (nucleosome-associated) complex, a complex that plays a central role in assembly of kinetochore proteins, mitotic progression and chromosome segregation. The CENPA-NAC complex recruits the CENPA-CAD (nucleosome distal) complex and may be involved in incorporation of newly synthesized CENPA into centromeres. CENPC recruits DNA methylation and DNMT3B to both centromeric and pericentromeric satellite repeats and regulates the histone code in these regions. This Mus musculus (Mouse) protein is Centromere protein C (Cenpc).